The chain runs to 329 residues: GTPase Obg (329 aa).

The Obg domain occupies 1–159 (MQFIDQARIT…WFLQLELKLL (159 aa)). The region spanning 160-328 (AEVGIIGLPN…LLAQVWKELG (169 aa)) is the OBG-type G domain. ATP contacts are provided by residues 166 to 173 (GLPNAGKS), 191 to 195 (FTTLV), 213 to 216 (DIPG), 280 to 283 (NKQE), and 309 to 311 (SAA). Mg(2+) contacts are provided by serine 173 and threonine 193.

It belongs to the TRAFAC class OBG-HflX-like GTPase superfamily. OBG GTPase family. In terms of assembly, monomer. The cofactor is Mg(2+).

The protein resides in the cytoplasm. Functionally, an essential GTPase which binds GTP, GDP and possibly (p)ppGpp with moderate affinity, with high nucleotide exchange rates and a fairly low GTP hydrolysis rate. Plays a role in control of the cell cycle, stress response, ribosome biogenesis and in those bacteria that undergo differentiation, in morphogenesis control. The polypeptide is GTPase Obg (Prochlorococcus marinus (strain MIT 9303)).